Here is a 225-residue protein sequence, read N- to C-terminus: Holliday junction branch migration complex subunit RuvA (225 aa).

The segment at 1–71 (MISWISGELV…EDSDLLFGFS (71 aa)) is domain I. The interval 72-150 (SKDQKNFFIE…NELKIQEEKS (79 aa)) is domain II. A flexible linker region spans residues 151–161 (KDEFHIKDNKI). Residues 161-225 (INKIVSDIEL…LDNDSSNIVR (65 aa)) are domain III.

The protein belongs to the RuvA family. In terms of assembly, homotetramer. Forms an RuvA(8)-RuvB(12)-Holliday junction (HJ) complex. HJ DNA is sandwiched between 2 RuvA tetramers; dsDNA enters through RuvA and exits via RuvB. An RuvB hexamer assembles on each DNA strand where it exits the tetramer. Each RuvB hexamer is contacted by two RuvA subunits (via domain III) on 2 adjacent RuvB subunits; this complex drives branch migration. In the full resolvosome a probable DNA-RuvA(4)-RuvB(12)-RuvC(2) complex forms which resolves the HJ.

The protein resides in the cytoplasm. The RuvA-RuvB-RuvC complex processes Holliday junction (HJ) DNA during genetic recombination and DNA repair, while the RuvA-RuvB complex plays an important role in the rescue of blocked DNA replication forks via replication fork reversal (RFR). RuvA specifically binds to HJ cruciform DNA, conferring on it an open structure. The RuvB hexamer acts as an ATP-dependent pump, pulling dsDNA into and through the RuvAB complex. HJ branch migration allows RuvC to scan DNA until it finds its consensus sequence, where it cleaves and resolves the cruciform DNA. This chain is Holliday junction branch migration complex subunit RuvA, found in Prochlorococcus marinus (strain MIT 9312).